Here is a 322-residue protein sequence, read N- to C-terminus: 6-deoxy-6-sulfo-D-fructose transketolase subunit SqwH (322 aa).

This sequence belongs to the transketolase family. As to quaternary structure, forms a complex with SqwG. Requires thiamine diphosphate as cofactor.

The enzyme catalyses 6-deoxy-6-sulfo-D-fructose + D-glyceraldehyde 3-phosphate = 4-deoxy-4-sulfo-D-erythrose + D-xylulose 5-phosphate. It catalyses the reaction 4-deoxy-4-sulfo-D-erythrulose + D-glyceraldehyde 3-phosphate = sulfoacetaldehyde + D-xylulose 5-phosphate. Its function is as follows. Part of the sulfo-TK pathway, a D-sulfoquinovose degradation pathway that produces 2-hydroxyethane-1-sulfonate (isethionate). Catalyzes two steps of the pathway: the formation of 4-deoxy-4-sulfoerythrose (SE) and xylulose 5-phosphate from 6-deoxy-6-sulfo-D-fructose (SF) and glyceraldehyde 3-phosphate, and the formation of sulfoacetaldehyde (SA) and xylulose 5-phosphate from 4-deoxy-4-sulfo-D-erythrulose (SEu) and glyceraldehyde 3-phosphate. The sequence is that of 6-deoxy-6-sulfo-D-fructose transketolase subunit SqwH from Clostridium sp. (strain MSTE9).